A 125-amino-acid polypeptide reads, in one-letter code: Acyl carrier protein, mitochondrial (125 aa).

The N-terminal 36 residues, 1 to 36 (MFRSVCRISSRVAPSAYRTIMGRSVMSNTILAQRFY), are a transit peptide targeting the mitochondrion. Positions 43 to 122 (DQVSQRVIDV…ETVDYIASNP (80 aa)) constitute a Carrier domain. An O-(pantetheine 4'-phosphoryl)serine modification is found at Ser82.

Belongs to the acyl carrier protein (ACP) family. In terms of assembly, complex I is composed of about 30 different subunits. 4'-phosphopantetheine is transferred from CoA to a specific serine of apo-ACP by acpS. This modification is essential for activity because fatty acids are bound in thioester linkage to the sulfhydryl of the prosthetic group.

Its subcellular location is the mitochondrion. The protein operates within lipid metabolism; fatty acid biosynthesis. In terms of biological role, carrier of the growing fatty acid chain in fatty acid biosynthesis. May be involved in the synthesis of very-long-chain fatty acids. Accessory and non-catalytic subunit of the mitochondrial membrane respiratory chain NADH dehydrogenase (Complex I), which functions in the transfer of electrons from NADH to the respiratory chain. The sequence is that of Acyl carrier protein, mitochondrial (ACP1) from Saccharomyces cerevisiae (strain ATCC 204508 / S288c) (Baker's yeast).